The primary structure comprises 344 residues: Succinylglutamate desuccinylase (344 aa).

Zn(2+) contacts are provided by His-63, Glu-66, and His-160. The active site involves Glu-224.

It belongs to the AspA/AstE family. Succinylglutamate desuccinylase subfamily. Zn(2+) is required as a cofactor.

It carries out the reaction N-succinyl-L-glutamate + H2O = L-glutamate + succinate. It participates in amino-acid degradation; L-arginine degradation via AST pathway; L-glutamate and succinate from L-arginine: step 5/5. Its function is as follows. Transforms N(2)-succinylglutamate into succinate and glutamate. In Shewanella sp. (strain W3-18-1), this protein is Succinylglutamate desuccinylase.